The following is a 434-amino-acid chain: Putative magnesium transporter MRS2-D (434 aa).

2 disordered regions span residues 126-171 and 279-311; these read AASP…DGEA and EASE…AGGG. Positions 279–291 are enriched in basic and acidic residues; that stretch reads EASELEDHSSRDE. The next 2 helical transmembrane spans lie at 367–387 and 405–425; these read GILL…TGVF and FPCA…AALL.

Belongs to the CorA metal ion transporter (MIT) (TC 1.A.35.5) family.

The protein localises to the membrane. Functionally, putative magnesium transporter. This chain is Putative magnesium transporter MRS2-D (MRS2-D), found in Oryza sativa subsp. japonica (Rice).